The sequence spans 711 residues: Polyribonucleotide nucleotidyltransferase (711 aa).

Mg(2+) is bound by residues Asp486 and Asp492. The 60-residue stretch at 553–612 (PRIHTIKINPDKIKDVIGKGGSVIRALTEETGTTIEIEDDGTVKIAATDGDKAQHAIRRI) folds into the KH domain. In terms of domain architecture, S1 motif spans 622–690 (GRIYNGKVTR…RQGRVRLSIK (69 aa)). The segment at 689–711 (IKEATEQTPSAAAPEAPAAEQGE) is disordered. Residues 694-711 (EQTPSAAAPEAPAAEQGE) are compositionally biased toward low complexity.

It belongs to the polyribonucleotide nucleotidyltransferase family. As to quaternary structure, component of the RNA degradosome, which is a multiprotein complex involved in RNA processing and mRNA degradation. Mg(2+) serves as cofactor.

It is found in the cytoplasm. It catalyses the reaction RNA(n+1) + phosphate = RNA(n) + a ribonucleoside 5'-diphosphate. Functionally, involved in mRNA degradation. Catalyzes the phosphorolysis of single-stranded polyribonucleotides processively in the 3'- to 5'-direction. This Klebsiella pneumoniae subsp. pneumoniae (strain ATCC 700721 / MGH 78578) protein is Polyribonucleotide nucleotidyltransferase.